The chain runs to 178 residues: Putative pre-16S rRNA nuclease (178 aa).

Positions 1-18 (MDHAEQGPDRPGVDDPGR) are enriched in basic and acidic residues. Residues 1–21 (MDHAEQGPDRPGVDDPGRGRR) are disordered.

Belongs to the YqgF nuclease family.

It localises to the cytoplasm. Its function is as follows. Could be a nuclease involved in processing of the 5'-end of pre-16S rRNA. This Rhodococcus jostii (strain RHA1) protein is Putative pre-16S rRNA nuclease.